We begin with the raw amino-acid sequence, 247 residues long: 5-oxoprolinase subunit A (247 aa).

This sequence belongs to the LamB/PxpA family. Forms a complex composed of PxpA, PxpB and PxpC.

The enzyme catalyses 5-oxo-L-proline + ATP + 2 H2O = L-glutamate + ADP + phosphate + H(+). Functionally, catalyzes the cleavage of 5-oxoproline to form L-glutamate coupled to the hydrolysis of ATP to ADP and inorganic phosphate. The chain is 5-oxoprolinase subunit A from Ralstonia pickettii (strain 12J).